Here is a 722-residue protein sequence, read N- to C-terminus: Threonine--tRNA ligase 1, cytoplasmic (722 aa).

Residues 1-10 show a composition bias toward polar residues; sequence MSQEKASSPS. Residues 1-48 form a disordered region; the sequence is MSQEKASSPSGKMDGEKPVDASEEKRKEGGKKKSKDGGGDGGRAELNP. Positions 13–27 are enriched in basic and acidic residues; that stretch reads MDGEKPVDASEEKRK. The TGS domain occupies 78–142; it reads DSKPIKVTLP…ETDCTLELLK (65 aa). N6-acetyllysine is present on Lys-242. The residue at position 245 (Thr-245) is a Phosphothreonine. Residue Tyr-297 is modified to Phosphotyrosine. Residue Thr-452 is modified to Phosphothreonine.

Belongs to the class-II aminoacyl-tRNA synthetase family. Homodimer. In terms of processing, ISGylated.

The protein resides in the cytoplasm. The enzyme catalyses tRNA(Thr) + L-threonine + ATP = L-threonyl-tRNA(Thr) + AMP + diphosphate + H(+). In terms of biological role, catalyzes the attachment of threonine to tRNA(Thr) in a two-step reaction: threonine is first activated by ATP to form Thr-AMP and then transferred to the acceptor end of tRNA(Thr). Also edits incorrectly charged tRNA(Thr) via its editing domain, at the post-transfer stage. This is Threonine--tRNA ligase 1, cytoplasmic (Tars1) from Mus musculus (Mouse).